A 204-amino-acid chain; its full sequence is Protein Nef (204 aa).

A disordered region spans residues 1-27 (MGNKWSKSWPQVRDRMRRAAPAPAADG). Glycine 2 carries N-myristoyl glycine; by host lipidation. Serine 6 is modified (phosphoserine; by host). The acidic; interacts with host PACS1 and PACS2; stabilizes the interaction of NEF/MHC-I with host AP1M1; necessary for MHC-I internalization stretch occupies residues 60–63 (TEEE). The segment at 67 to 76 (PVRPQVPLRP) is SH3-binding; interaction with Src family tyrosine kinases. A PxxP; stabilizes the interaction of NEF/MHC-I with host AP1M1; necessary for MHC-I internalization motif is present at residues 70–73 (PQVP). The tract at residues 106 to 122 (EILDLWVHNTQGYFPDW) is mediates dimerization, Nef-PTE1 interaction. The tract at residues 146 to 178 (VDPSEVEEANEGENNCLLHPACQHGIEDEEREV) is binding to ATP6V1H. The Dileucine internalization motif; necessary for CD4 internalization signature appears at 162–163 (LL). The short motif at 172-173 (ED) is the Diacidic; necessary for CD4 internalization element.

Belongs to the lentivirus primate group Nef protein family. As to quaternary structure, monomer; cytosolic form. Homodimer; membrane bound form. Interacts with Nef associated p21-activated kinase (PAK2); this interaction activates PAK2. Associates with the Nef-MHC-I-AP1 complex; this complex is required for MHC-I internalization. Interacts (via C-terminus) with host PI3-kinase. Interacts with host PACS1; this interaction seems to be weak. Interacts with host PACS2. Interacts with host LCK and MAPK3; these interactions inhibit the kinase activity of the latter. Interacts with host ATP6V1H; this interaction may play a role in CD4 endocytosis. Associates with the CD4-Nef-AP2 complex; this complex is required for CD4 internalization. Interacts with host AP2 subunit alpha and AP2 subunit sigma2. Interacts with TCR-zeta chain; this interaction up-regulates the Fas ligand (FasL) surface expression. Interacts with host HCK, LYN, and SRC; these interactions activate the Src family kinases. Interacts with MAP3K5; this interaction inhibits the Fas and TNFR-mediated death signals. Interacts with beta-COP and PTE1. Interacts with human RACK1; this increases Nef phosphorylation by PKC. Interacts with TP53; this interaction decreases the half-life of TP53, protecting the infected cell against p53-mediated apoptosis. Post-translationally, the virion-associated Nef proteins are cleaved by the viral protease to release the soluble C-terminal core protein. Nef is probably cleaved concomitantly with viral structural proteins on maturation of virus particles. In terms of processing, myristoylated. Phosphorylated on serine residues, probably by host PKCdelta and theta.

The protein resides in the host cell membrane. Its subcellular location is the virion. The protein localises to the secreted. It is found in the host Golgi apparatus membrane. Functionally, factor of infectivity and pathogenicity, required for optimal virus replication. Alters numerous pathways of T-lymphocyte function and down-regulates immunity surface molecules in order to evade host defense and increase viral infectivity. Alters the functionality of other immunity cells, like dendritic cells, monocytes/macrophages and NK cells. Its function is as follows. In infected CD4(+) T-lymphocytes, down-regulates the surface MHC-I, mature MHC-II, CD4, CD28, CCR5 and CXCR4 molecules. Mediates internalization and degradation of host CD4 through the interaction of with the cytoplasmic tail of CD4, the recruitment of AP-2 (clathrin adapter protein complex 2), internalization through clathrin coated pits, and subsequent transport to endosomes and lysosomes for degradation. Diverts host MHC-I molecules to the trans-Golgi network-associated endosomal compartments by an endocytic pathway to finally target them for degradation. MHC-I down-regulation may involve AP-1 (clathrin adapter protein complex 1) or possibly Src family kinase-ZAP70/Syk-PI3K cascade recruited by PACS2. In consequence infected cells are masked for immune recognition by cytotoxic T-lymphocytes. Decreasing the number of immune receptors also prevents reinfection by more HIV particles (superinfection). Down-regulates host SERINC3 and SERINC5 thereby excluding these proteins from the viral particles. Virion infectivity is drastically higher when SERINC3 or SERINC5 are excluded from the viral envelope, because these host antiviral proteins impair the membrane fusion event necessary for subsequent virion penetration. Bypasses host T-cell signaling by inducing a transcriptional program nearly identical to that of anti-CD3 cell activation. Interaction with TCR-zeta chain up-regulates the Fas ligand (FasL). Increasing surface FasL molecules and decreasing surface MHC-I molecules on infected CD4(+) cells send attacking cytotoxic CD8+ T-lymphocytes into apoptosis. In terms of biological role, plays a role in optimizing the host cell environment for viral replication without causing cell death by apoptosis. Protects the infected cells from apoptosis in order to keep them alive until the next virus generation is ready to strike. Inhibits the Fas and TNFR-mediated death signals by blocking MAP3K5/ASK1. Decreases the half-life of TP53, protecting the infected cell against p53-mediated apoptosis. Inhibits the apoptotic signals regulated by the Bcl-2 family proteins through the formation of a Nef/PI3-kinase/PAK2 complex that leads to activation of PAK2 and induces phosphorylation of host BAD. Functionally, extracellular Nef protein targets CD4(+) T-lymphocytes for apoptosis by interacting with CXCR4 surface receptors. This is Protein Nef from Homo sapiens (Human).